Consider the following 1137-residue polypeptide: Receptor-type guanylate cyclase gcy-1 (1137 aa).

An N-terminal signal peptide occupies residues 1–18 (MQIFTILLLFNIFPSIFV). The Extracellular segment spans residues 19-494 (QNLPDTTVAP…CPVSFWEQYK (476 aa)). Asparagine 219, asparagine 348, asparagine 358, asparagine 384, asparagine 417, and asparagine 451 each carry an N-linked (GlcNAc...) asparagine glycan. The helical transmembrane segment at 495 to 515 (ILIFVAIAVIVLMVLIMIIGC) threads the bilayer. Over 516 to 1137 (LCVISGKRAE…FKMDTLKVAN (622 aa)) the chain is Cytoplasmic. Positions 557 to 826 (LQSAPSISTG…ENICSQMKGL (270 aa)) constitute a Protein kinase domain. Residues 840-871 (NMLEEYTSTLEEEIEERTKELTLEKKKADILL) are a coiled coil. The 131-residue stretch at 898–1028 (TVFFSDVVKF…DTVNTASRME (131 aa)) folds into the Guanylate cyclase domain. The segment at 1086–1122 (ELRSISNRSTPPVTNDRWIPNPSSSHGSRPSSVYDPL) is disordered. Polar residues predominate over residues 1088 to 1098 (RSISNRSTPPV). Over residues 1105 to 1117 (PNPSSSHGSRPSS) the composition is skewed to low complexity.

This sequence belongs to the adenylyl cyclase class-4/guanylyl cyclase family. In terms of tissue distribution, expressed predominantly in sensory neurons. Expressed asymmetrically in the right ASE (ASER) neuron and bilaterally in ASI and URX neurons. Expressed in PVT and bilaterally in AIY non-sensory neurons. Expressed in intestine.

The protein localises to the membrane. The enzyme catalyses GTP = 3',5'-cyclic GMP + diphosphate. Functionally, guanylate cyclase involved in the production of the second messenger cGMP. Involved in the sensing of K+ gradient by the ASE right (ASER) sensory neuron. The protein is Receptor-type guanylate cyclase gcy-1 (gcy-1) of Caenorhabditis elegans.